An 895-amino-acid polypeptide reads, in one-letter code: Protein translocase subunit SecA (895 aa).

Residues Q90, G108–S112, and D498 contribute to the ATP site.

This sequence belongs to the SecA family.

It is found in the plastid. The protein resides in the chloroplast stroma. It localises to the chloroplast thylakoid membrane. The catalysed reaction is ATP + H2O + cellular proteinSide 1 = ADP + phosphate + cellular proteinSide 2.. In terms of biological role, has a central role in coupling the hydrolysis of ATP to the transfer of proteins across the thylakoid membrane. The protein is Protein translocase subunit SecA of Cyanidium caldarium (Red alga).